Reading from the N-terminus, the 218-residue chain is Claudin-5 (218 aa).

Residues 1 to 7 (MGSAALE) are Cytoplasmic-facing. Residues 8-28 (ILGLVLCLVGWGGLILACGLP) traverse the membrane as a helical segment. Residues 29–81 (MWQVTAFLDHNIVTAQTTWKGLWMSCVVQSTGHMQCKVYDSVLALSTEVQAAR) lie on the Extracellular side of the membrane. A helical membrane pass occupies residues 82–102 (ALTVSAVLLAFVALFVTLAGA). Topologically, residues 103–122 (QCTTCVAPGPAKARVALTGG) are cytoplasmic. The helical transmembrane segment at 123–143 (VLYLFCGLLALVPLCWFANIV) threads the bilayer. Residues 144 to 159 (VREFYDPSVPVSQKYE) lie on the Extracellular side of the membrane. Residues 160–180 (LGAALYIGWAATALLMVGGCL) traverse the membrane as a helical segment. Over 181-218 (LCCGAWVCTGRPDLSFPVKYSAPRRPTATGDYDKKNYV) the chain is Cytoplasmic. An interactions with TJP1, TJP2 and TJP3 region spans residues 217–218 (YV).

It belongs to the claudin family. Directly interacts with TJP1/ZO-1, TJP2/ZO-2 and TJP3/ZO-3. Interacts with MPDZ.

The protein resides in the cell junction. The protein localises to the tight junction. It is found in the cell membrane. In terms of biological role, plays a major role in tight junction-specific obliteration of the intercellular space. The chain is Claudin-5 (CLDN5) from Homo sapiens (Human).